The primary structure comprises 564 residues: Laccase-22 (564 aa).

Positions 1-25 (MAVLPESRRLSLLLMAACFLLQALS) are cleaved as a signal peptide. 2 consecutive Plastocyanin-like domains span residues 36–152 (NVVM…PKLG) and 162–314 (KEAV…YANT). N-linked (GlcNAc...) asparagine glycans are attached at residues N41 and N82. H86 and H88 together coordinate Cu cation. Residue N118 is glycosylated (N-linked (GlcNAc...) asparagine). Cu cation is bound by residues H131 and H133. N-linked (GlcNAc...) asparagine glycans are attached at residues N191, N302, N331, N379, N389, N424, N437, and N447. The 135-residue stretch at 414 to 548 (DFPATPLHKF…KMAFVVDNGK (135 aa)) folds into the Plastocyanin-like 3 domain. Cu cation-binding residues include H465, H468, H470, H527, C528, H529, and H533.

The protein belongs to the multicopper oxidase family. Cu cation is required as a cofactor.

It localises to the secreted. The protein resides in the extracellular space. It is found in the apoplast. The catalysed reaction is 4 hydroquinone + O2 = 4 benzosemiquinone + 2 H2O. Its function is as follows. Lignin degradation and detoxification of lignin-derived products. The sequence is that of Laccase-22 (LAC22) from Oryza sativa subsp. japonica (Rice).